A 274-amino-acid polypeptide reads, in one-letter code: Orotidine 5'-phosphate decarboxylase (274 aa).

Catalysis depends on K95, which acts as the Proton donor.

It belongs to the OMP decarboxylase family. Type 2 subfamily.

It catalyses the reaction orotidine 5'-phosphate + H(+) = UMP + CO2. It participates in pyrimidine metabolism; UMP biosynthesis via de novo pathway; UMP from orotate: step 2/2. This Paracidovorax citrulli (strain AAC00-1) (Acidovorax citrulli) protein is Orotidine 5'-phosphate decarboxylase.